The chain runs to 392 residues: Adenine nucleotide transporter BT1, chloroplastic/mitochondrial (392 aa).

Solcar repeat units lie at residues 108–191 (NPSL…VNKK), 202–286 (IPIP…LRKA), and 296–384 (IGNI…CKKI). The next 6 helical transmembrane spans lie at 113–133 (RLLS…PLET), 168–188 (LVNV…FETV), 204–224 (IPAS…LTYP), 263–283 (APSL…YDSL), 302–322 (LLIG…LEVA), and 359–379 (GLGP…MCYE).

Belongs to the mitochondrial carrier (TC 2.A.29) family. Expressed in root tips, the central cylinder of young roots, and maturating and germinating pollen.

The protein resides in the plastid. It is found in the chloroplast inner membrane. The protein localises to the mitochondrion inner membrane. Inhibited by pyridoxal 5-phosphate but not mersalyl. Probable mitochondrial adenylate carrier that catalyzes the transport of ATP, ADP and AMP, but not ADP-glucose. Recombinant BT1 shows a unidirectional mode of transport in intact E.coli cells. May function as a plastidial nucleotide uniport carrier required to export newly synthesized adenylates into the cytosol. May be involved in abiotic stress response. In Arabidopsis thaliana (Mouse-ear cress), this protein is Adenine nucleotide transporter BT1, chloroplastic/mitochondrial (BT1).